Here is a 599-residue protein sequence, read N- to C-terminus: Spermatogenesis-associated protein 7 (599 aa).

Residues 163–205 (KSSKVITNGPEKNSSSSPSSVDYAASGPRKLSSGALYGRRPRS) are disordered. Residues 166 to 175 (KVITNGPEKN) are compositionally biased toward polar residues.

As to quaternary structure, found in a complex with CFAP410, NEK1 and SPATA7. Interacts with NEK1. Interacts with RPGRIP1. Interacts with RPGR. Interacts with NPHP4. Interacts with NPHP1. Interacts with AHI1.

It localises to the cytoplasm. The protein localises to the cytoskeleton. The protein resides in the cilium axoneme. Its subcellular location is the cilium basal body. It is found in the cell projection. It localises to the cilium. The protein localises to the photoreceptor outer segment. Functionally, involved in the maintenance of both rod and cone photoreceptor cells. It is required for recruitment and proper localization of RPGRIP1 to the photoreceptor connecting cilium (CC), as well as photoreceptor-specific localization of proximal CC proteins at the distal CC. Maintenance of protein localization at the photoreceptor-specific distal CC is essential for normal microtubule stability and to prevent photoreceptor degeneration. This is Spermatogenesis-associated protein 7 (SPATA7) from Homo sapiens (Human).